We begin with the raw amino-acid sequence, 351 residues long: Photosystem II D2 protein (351 aa).

Residues 39–59 (CSYLALGAWFTGTTFVTSWYT) traverse the membrane as a helical segment. H116 contacts chlorophyll a. Residues 123-139 (GFCLRQFEIARLVGLRP) form a helical membrane-spanning segment. Residues Q128 and N141 each coordinate pheophytin a. A helical membrane pass occupies residues 151–164 (VFVSVFLLYPLGQA). H196 contributes to the chlorophyll a binding site. The helical transmembrane segment at 206-226 (GALLCAIHGATVQNTLFEDGE) threads the bilayer. A plastoquinone is bound by residues H213 and F260. Residue H213 participates in Fe cation binding. H267 serves as a coordination point for Fe cation. The helical transmembrane segment at 277–293 (GLWASSIGIVGLALNLR) threads the bilayer.

It belongs to the reaction center PufL/M/PsbA/D family. PSII is composed of 1 copy each of membrane proteins PsbA, PsbB, PsbC, PsbD, PsbE, PsbF, PsbH, PsbI, PsbJ, PsbK, PsbL, PsbM, PsbT, PsbX, PsbY, PsbZ, Psb30/Ycf12, at least 3 peripheral proteins of the oxygen-evolving complex and a large number of cofactors. It forms dimeric complexes. Requires The D1/D2 heterodimer binds P680, chlorophylls that are the primary electron donor of PSII, and subsequent electron acceptors. It shares a non-heme iron and each subunit binds pheophytin, quinone, additional chlorophylls, carotenoids and lipids. There is also a Cl(-1) ion associated with D1 and D2, which is required for oxygen evolution. The PSII complex binds additional chlorophylls, carotenoids and specific lipids. as cofactor.

The protein localises to the plastid. It is found in the chloroplast thylakoid membrane. The catalysed reaction is 2 a plastoquinone + 4 hnu + 2 H2O = 2 a plastoquinol + O2. Photosystem II (PSII) is a light-driven water:plastoquinone oxidoreductase that uses light energy to abstract electrons from H(2)O, generating O(2) and a proton gradient subsequently used for ATP formation. It consists of a core antenna complex that captures photons, and an electron transfer chain that converts photonic excitation into a charge separation. The D1/D2 (PsbA/PsbD) reaction center heterodimer binds P680, the primary electron donor of PSII as well as several subsequent electron acceptors. D2 is needed for assembly of a stable PSII complex. This is Photosystem II D2 protein from Cyanidioschyzon merolae (strain NIES-3377 / 10D) (Unicellular red alga).